The primary structure comprises 240 residues: Adenylate dimethylallyltransferase (240 aa).

The protein belongs to the isopentenyl transferase family.

The enzyme catalyses dimethylallyl diphosphate + AMP = N(6)-(dimethylallyl)adenosine 5'-phosphate + diphosphate. In terms of biological role, transfers dimethylallyl groups to AMP as part of the biosynthesis of cytokinin phytohormones. In Agrobacterium vitis (Rhizobium vitis), this protein is Adenylate dimethylallyltransferase (ipt).